The sequence spans 244 residues: 1-(5-phosphoribosyl)-5-[(5-phosphoribosylamino)methylideneamino] imidazole-4-carboxamide isomerase (244 aa).

The active-site Proton acceptor is the Asp-10. Residue Asp-132 is the Proton donor of the active site.

This sequence belongs to the HisA/HisF family.

Its subcellular location is the cytoplasm. The enzyme catalyses 1-(5-phospho-beta-D-ribosyl)-5-[(5-phospho-beta-D-ribosylamino)methylideneamino]imidazole-4-carboxamide = 5-[(5-phospho-1-deoxy-D-ribulos-1-ylimino)methylamino]-1-(5-phospho-beta-D-ribosyl)imidazole-4-carboxamide. The protein operates within amino-acid biosynthesis; L-histidine biosynthesis; L-histidine from 5-phospho-alpha-D-ribose 1-diphosphate: step 4/9. This chain is 1-(5-phosphoribosyl)-5-[(5-phosphoribosylamino)methylideneamino] imidazole-4-carboxamide isomerase, found in Xanthomonas euvesicatoria pv. vesicatoria (strain 85-10) (Xanthomonas campestris pv. vesicatoria).